The chain runs to 393 residues: Sedoheptulose-1,7-bisphosphatase, chloroplastic (393 aa).

Cysteines 115 and 120 form a disulfide. Residues Asp-126, Glu-155, Asp-176, Leu-178, and Asp-179 each contribute to the Mg(2+) site. Substrate contacts are provided by residues 179-182, Tyr-290, and Lys-320; that span reads DGSS. Glu-326 lines the Mg(2+) pocket.

It belongs to the FBPase class 1 family. Homodimer. The cofactor is Mg(2+).

Its subcellular location is the plastid. It localises to the chloroplast. It carries out the reaction D-sedoheptulose 1,7-bisphosphate + H2O = D-sedoheptulose 7-phosphate + phosphate. Its pathway is carbohydrate biosynthesis; Calvin cycle. The chain is Sedoheptulose-1,7-bisphosphatase, chloroplastic from Triticum aestivum (Wheat).